We begin with the raw amino-acid sequence, 532 residues long: Bone morphogenetic protein receptor type-1A (532 aa).

The N-terminal stretch at 1–23 (MTQLYTYIRLLGACLFIISHVQG) is a signal peptide. Over 24-152 (QNLDSMLHGT…IGPFFDGSVR (129 aa)) the chain is Extracellular. 3 cysteine pairs are disulfide-bonded: cysteine 61–cysteine 82, cysteine 63–cysteine 67, and cysteine 76–cysteine 100. Residue asparagine 73 is glycosylated (N-linked (GlcNAc...) asparagine). The interval 107–109 (DFQ) is mediates specificity for BMP ligand. 2 disulfide bridges follow: cysteine 110–cysteine 124 and cysteine 125–cysteine 130. A helical membrane pass occupies residues 153–176 (WLAVLISMAVCIVAMIVFSSCFCY). Residues 177 to 532 (KHYCKSISSR…KMVESQDVKI (356 aa)) lie on the Cytoplasmic side of the membrane. Residues 204–233 (ESLKDLIDQSQSSGSGSGLPLLVQRTIAKQ) form the GS domain. Residues 234 to 525 (IQMVRQVGKG…RIKKTLAKMV (292 aa)) enclose the Protein kinase domain. Residues 240 to 248 (VGKGRYGEV) and lysine 261 contribute to the ATP site. Aspartate 362 acts as the Proton acceptor in catalysis.

The protein belongs to the protein kinase superfamily. TKL Ser/Thr protein kinase family. TGFB receptor subfamily. Interacts with low affinity with GDF5; positively regulates chondrocyte differentiation. Interacts with BMP4. Interacts with SCUBE3. Interacts with TSC22D1/TSC-22. Interacts with BMP2; the interaction may induce HAMP expression. Interacts with BMP6. Interacts with heterodimers composed of BMP2 and BMP6 in vitro; the interaction may induce HAMP expression. Mg(2+) serves as cofactor. The cofactor is Mn(2+). Post-translationally, glycosylated.

The protein resides in the cell membrane. It localises to the cell surface. The catalysed reaction is L-threonyl-[receptor-protein] + ATP = O-phospho-L-threonyl-[receptor-protein] + ADP + H(+). It carries out the reaction L-seryl-[receptor-protein] + ATP = O-phospho-L-seryl-[receptor-protein] + ADP + H(+). On ligand binding, forms a receptor complex consisting of two type II and two type I transmembrane serine/threonine kinases. Type II receptors phosphorylate and activate type I receptors which autophosphorylate, then bind and activate SMAD transcriptional regulators. Receptor for BMP2, BMP4, GDF5 and GDF6. Positively regulates chondrocyte differentiation through GDF5 interaction. Mediates induction of adipogenesis by GDF6. May promote the expression of HAMP, potentially via its interaction with BMP2. This is Bone morphogenetic protein receptor type-1A (Bmpr1a) from Rattus norvegicus (Rat).